We begin with the raw amino-acid sequence, 206 residues long: Protein SUE1, mitochondrial (206 aa).

Residues 1–24 (MILLKRTKIRGVSVSFVSLQRRTH) constitute a mitochondrion transit peptide.

Its subcellular location is the mitochondrion envelope. Required for degradation of unstable forms of cytochrome c. The sequence is that of Protein SUE1, mitochondrial from Saccharomyces cerevisiae (strain ATCC 204508 / S288c) (Baker's yeast).